The primary structure comprises 739 residues: Protein NPGR2 (739 aa).

The segment at 32–71 (EQMRHREEEDKKSEVGVGRDYNGSSALSTAESENAKKLDN) is disordered. Over residues 33–45 (QMRHREEEDKKSE) the composition is skewed to basic and acidic residues. The span at 53 to 63 (NGSSALSTAES) shows a compositional bias: polar residues. 9 TPR repeats span residues 90-127 (EEAR…KMKT), 162-195 (FEAI…VETS), 215-248 (TKAV…HWKL), 465-498 (PRVV…GAES), 500-533 (LEVW…TGKW), 536-569 (GKLL…LQVQ), 592-625 (LGTW…APYS), 626-659 (SVRY…DPMH), and 697-733 (HSAW…EETM).

In terms of assembly, interacts with calmodulin in a calcium-dependent manner. As to expression, expressed in pollen, flowers and fruits.

This is Protein NPGR2 from Arabidopsis thaliana (Mouse-ear cress).